A 486-amino-acid chain; its full sequence is Receptor-interacting serine/threonine-protein kinase 3 (486 aa).

Phosphoserine is present on serine 2. The Protein kinase domain maps to 22–292 (LKKLEFVGKG…DCEPKTNEVY (271 aa)). ATP is bound by residues 28-36 (VGKGGFGVV) and lysine 51. Catalysis depends on aspartate 143, which acts as the Proton acceptor. Serine 165 carries the post-translational modification Phosphoserine. A Phosphothreonine modification is found at threonine 187. Position 204 is a phosphoserine; by autocatalysis (serine 204). At threonine 231 the chain carries Phosphothreonine; by autocatalysis. Position 232 is a phosphoserine; by autocatalysis (serine 232). Threonine 257 is modified (phosphothreonine). A phosphoserine mark is found at serine 304 and serine 326. Residues 312–333 (QHRSSGRNLSAREPSQRGTEMD) are disordered. Position 338 is a phosphothreonine (threonine 338). The interval 349–388 (LEEPSGPVPGKCPERQAQDTSVGPATPARTSSDPVAGTPQ) is disordered. A phosphoserine mark is found at serine 353, serine 369, and serine 380. A compositionally biased stretch (polar residues) spans 366 to 381 (QDTSVGPATPARTSSD). Phosphothreonine is present on threonine 392. Residues 440 to 461 (LVFNNCSEVQIGNYNSLVAPPR) carry the RIP homotypic interaction motif (RHIM) motif. The interval 462–486 (TTASSSAKYDQAQFGRGRGWQPFHK) is disordered. Arginine 477 carries the post-translational modification Omega-N-methylarginine.

Belongs to the protein kinase superfamily. TKL Ser/Thr protein kinase family. Interacts (via RIP homotypic interaction motif) with RIPK1 (via RIP homotypic interaction motif); this interaction induces RIPK1 phosphorylation and formation of a RIPK1-RIPK3 necrosis-inducing complex. Interacts with MLKL; the interaction is direct and triggers necroptosis. Interacts with ZBP1 (via RIP homotypic interaction motif); interaction with ZBP1 activates RIPK3, triggering necroptosis. Upon TNF-induced necrosis, the RIPK1-RIPK3 dimer further interacts with PGAM5 and MLKL; the formation of this complex leads to PGAM5 phosphorylation and increase in PGAM5 phosphatase activity. Binds TRAF2 and is recruited to the TNFR-1 signaling complex. Interacts with PYGL, GLUL and GLUD1; these interactions result in activation of these metabolic enzymes. Interacts with BIRC2/c-IAP1, BIRC3/c-IAP2 and XIAP/BIRC4. Interacts with ARHGEF2. Interacts with PELI1 (via atypical FHA domain); the phosphorylated form at Thr-187 binds preferentially to PELI1. Interacts with BUB1B, TRAF2 and STUB1. Interacts with CASP6. Component of the AIM2 PANoptosome complex, a multiprotein complex that drives inflammatory cell death (PANoptosis). As to quaternary structure, (Microbial infection) Interacts (via RIP homotypic interaction motif) with murid herpesvirus protein RIR1; this interaction disrupts RIP3-RIP1 interactions characteristic of TNF-alpha induced necroptosis, thereby suppressing this death pathway. RIPK1 and RIPK3 undergo reciprocal auto- and trans-phosphorylation. Autophosphorylated following interaction with ZBP1. Phosphorylation of Ser-204 plays a role in the necroptotic function of RIPK3. Autophosphorylates at Thr-231 and Ser-232 following activation by ZBP1: phosphorylation at these sites is a hallmark of necroptosis and is required for binding MLKL. Phosphorylation at Thr-187 is important for its kinase activity, interaction with PELI1 and for its ability to mediate TNF-induced necroptosis. Post-translationally, polyubiquitinated with 'Lys-48' and 'Lys-63'-linked chains by BIRC2/c-IAP1 and BIRC3/c-IAP2, leading to activation of NF-kappa-B. Ubiquitinated by STUB1 leading to its subsequent proteasome-dependent degradation. Expressed in embryo and in adult spleen, liver, testis, heart, brain and lung.

The protein localises to the cytoplasm. The protein resides in the cytosol. It is found in the nucleus. It catalyses the reaction L-seryl-[protein] + ATP = O-phospho-L-seryl-[protein] + ADP + H(+). It carries out the reaction L-threonyl-[protein] + ATP = O-phospho-L-threonyl-[protein] + ADP + H(+). With respect to regulation, activity is stimulated by ZBP1, which senses double-stranded Z-RNA structures. RIPK3-dependent necroptosis is inhibited by RIPK1: RIPK1 prevents the ZBP1-induced activation of RIPK3 via FADD-mediated recruitment of CASP8, which cleaves RIPK1 and limits TNF-induced necroptosis. Inhibited by type II inhibitor 1-(4-fluorophenyl)-N-[3-fluoro-4-(1H-pyrrolo[2,3-b]pyridin-4-yloxy)phenyl]-2-oxo-1,2-dihydropyridine-3-carboxamide. Its function is as follows. Serine/threonine-protein kinase that activates necroptosis and apoptosis, two parallel forms of cell death. Necroptosis, a programmed cell death process in response to death-inducing TNF-alpha family members, is triggered by RIPK3 following activation by ZBP1. Activated RIPK3 forms a necrosis-inducing complex and mediates phosphorylation of MLKL, promoting MLKL localization to the plasma membrane and execution of programmed necrosis characterized by calcium influx and plasma membrane damage. In addition to TNF-induced necroptosis, necroptosis can also take place in the nucleus in response to orthomyxoviruses infection: following ZBP1 activation, which senses double-stranded Z-RNA structures, nuclear RIPK3 catalyzes phosphorylation and activation of MLKL, promoting disruption of the nuclear envelope and leakage of cellular DNA into the cytosol. Also regulates apoptosis: apoptosis depends on RIPK1, FADD and CASP8, and is independent of MLKL and RIPK3 kinase activity. Phosphorylates RIPK1: RIPK1 and RIPK3 undergo reciprocal auto- and trans-phosphorylation. In some cell types, also able to restrict viral replication by promoting cell death-independent responses. In response to flavivirus infection in neurons, promotes a cell death-independent pathway that restricts viral replication: together with ZBP1, promotes a death-independent transcriptional program that modifies the cellular metabolism via up-regulation expression of the enzyme ACOD1/IRG1 and production of the metabolite itaconate. Itaconate inhibits the activity of succinate dehydrogenase, generating a metabolic state in neurons that suppresses replication of viral genomes. RIPK3 binds to and enhances the activity of three metabolic enzymes: GLUL, GLUD1, and PYGL. These metabolic enzymes may eventually stimulate the tricarboxylic acid cycle and oxidative phosphorylation, which could result in enhanced ROS production. In Mus musculus (Mouse), this protein is Receptor-interacting serine/threonine-protein kinase 3.